The chain runs to 412 residues: Imidazolonepropionase (412 aa).

The Fe(3+) site is built by histidine 76 and histidine 78. Residues histidine 76 and histidine 78 each coordinate Zn(2+). 4-imidazolone-5-propanoate is bound by residues arginine 85, tyrosine 148, and histidine 181. Tyrosine 148 contributes to the N-formimidoyl-L-glutamate binding site. A Fe(3+)-binding site is contributed by histidine 242. Histidine 242 is a Zn(2+) binding site. Glutamate 245 serves as a coordination point for 4-imidazolone-5-propanoate. Fe(3+) is bound at residue aspartate 317. Aspartate 317 is a Zn(2+) binding site. The N-formimidoyl-L-glutamate site is built by asparagine 319 and glycine 321. Serine 322 is a 4-imidazolone-5-propanoate binding site.

The protein belongs to the metallo-dependent hydrolases superfamily. HutI family. It depends on Zn(2+) as a cofactor. Fe(3+) is required as a cofactor.

Its subcellular location is the cytoplasm. The catalysed reaction is 4-imidazolone-5-propanoate + H2O = N-formimidoyl-L-glutamate. It participates in amino-acid degradation; L-histidine degradation into L-glutamate; N-formimidoyl-L-glutamate from L-histidine: step 3/3. Its function is as follows. Catalyzes the hydrolytic cleavage of the carbon-nitrogen bond in imidazolone-5-propanoate to yield N-formimidoyl-L-glutamate. It is the third step in the universal histidine degradation pathway. The polypeptide is Imidazolonepropionase (Staphylococcus aureus (strain Mu50 / ATCC 700699)).